Here is a 101-residue protein sequence, read N- to C-terminus: Protein Tat (101 aa).

Positions 1–10 (MEPVDPRLEP) are enriched in basic and acidic residues. Residues 1 to 20 (MEPVDPRLEPWNHPGSQPKT) are disordered. An interaction with human CREBBP region spans residues 1–24 (MEPVDPRLEPWNHPGSQPKTACNN). Residues 1-48 (MEPVDPRLEPWNHPGSQPKTACNNCYCKRCCYHCLYCFTKKGLGISYG) form a transactivation region. Zn(2+) contacts are provided by Cys22, Cys25, and Cys27. Positions 22–37 (CNNCYCKRCCYHCLYC) are cysteine-rich. The residue at position 28 (Lys28) is an N6-acetyllysine; by host PCAF. Zn(2+) contacts are provided by Cys30, His33, Cys34, and Cys37. The tract at residues 38–48 (FTKKGLGISYG) is core. Residues 48–58 (GRKKRSQRRRT) are compositionally biased toward basic residues. The interval 48–101 (GRKKRSQRRRTPQSSKSHQDLIPEQPLSQQQGDQTGQKKQKEALESKTEADPCD) is disordered. A Nuclear localization signal, RNA-binding (TAR), and protein transduction motif is present at residues 49-57 (RKKRSQRRR). The tract at residues 49–86 (RKKRSQRRRTPQSSKSHQDLIPEQPLSQQQGDQTGQKK) is interaction with the host capping enzyme RNGTT. N6-acetyllysine; by host EP300 and GCN5L2 is present on residues Lys50 and Lys51. Residue Arg52 is modified to Asymmetric dimethylarginine; by host PRMT6. The span at 86–101 (KQKEALESKTEADPCD) shows a compositional bias: basic and acidic residues.

The protein belongs to the lentiviruses Tat family. In terms of assembly, interacts with host CCNT1. Associates with the P-TEFb complex composed at least of Tat, P-TEFb (CDK9 and CCNT1), TAR RNA, RNA Pol II. Recruits the HATs CREBBP, TAF1/TFIID, EP300, PCAF and GCN5L2. Interacts with host KAT5/Tip60; this interaction targets the latter to degradation. Interacts with the host deacetylase SIRT1. Interacts with host capping enzyme RNGTT; this interaction stimulates RNGTT. Binds to host KDR, and to the host integrins ITGAV/ITGB3 and ITGA5/ITGB1. Interacts with host KPNB1/importin beta-1 without previous binding to KPNA1/importin alpha-1. Interacts with EIF2AK2. Interacts with host nucleosome assembly protein NAP1L1; this interaction may be required for the transport of Tat within the nucleus, since the two proteins interact at the nuclear rim. Interacts with host C1QBP/SF2P32; this interaction involves lysine-acetylated Tat. Interacts with the host chemokine receptors CCR2, CCR3 and CXCR4. Interacts with host DPP4/CD26; this interaction may trigger an anti-proliferative effect. Interacts with host LDLR. Interacts with the host extracellular matrix metalloproteinase MMP1. Interacts with host PRMT6; this interaction mediates Tat's methylation. Interacts with, and is ubiquitinated by MDM2/Hdm2. Interacts with host PSMC3 and HTATIP2. Interacts with STAB1; this interaction may overcome SATB1-mediated repression of IL2 and IL2RA (interleukin) in T cells by binding to the same domain than HDAC1. Interacts (when acetylated) with human CDK13, thereby increasing HIV-1 mRNA splicing and promoting the production of the doubly spliced HIV-1 protein Nef. Interacts with host TBP; this interaction modulates the activity of transcriptional pre-initiation complex. Interacts with host RELA. Interacts with host PLSCR1; this interaction negatively regulates Tat transactivation activity by altering its subcellular distribution. In terms of processing, asymmetrical arginine methylation by host PRMT6 seems to diminish the transactivation capacity of Tat and affects the interaction with host CCNT1. Acetylation by EP300, CREBBP, GCN5L2/GCN5 and PCAF regulates the transactivation activity of Tat. EP300-mediated acetylation of Lys-50 promotes dissociation of Tat from the TAR RNA through the competitive binding to PCAF's bromodomain. In addition, the non-acetylated Tat's N-terminus can also interact with PCAF. PCAF-mediated acetylation of Lys-28 enhances Tat's binding to CCNT1. Lys-50 is deacetylated by SIRT1. Post-translationally, polyubiquitination by host MDM2 does not target Tat to degradation, but activates its transactivation function and fosters interaction with CCNT1 and TAR RNA. In terms of processing, phosphorylated by EIF2AK2 on serine and threonine residues adjacent to the basic region important for TAR RNA binding and function. Phosphorylation of Tat by EIF2AK2 is dependent on the prior activation of EIF2AK2 by dsRNA.

It localises to the host nucleus. The protein resides in the host nucleolus. It is found in the host cytoplasm. Its subcellular location is the secreted. In terms of biological role, transcriptional activator that increases RNA Pol II processivity, thereby increasing the level of full-length viral transcripts. Recognizes a hairpin structure at the 5'-LTR of the nascent viral mRNAs referred to as the transactivation responsive RNA element (TAR) and recruits the cyclin T1-CDK9 complex (P-TEFb complex) that will in turn hyperphosphorylate the RNA polymerase II to allow efficient elongation. The CDK9 component of P-TEFb and other Tat-activated kinases hyperphosphorylate the C-terminus of RNA Pol II that becomes stabilized and much more processive. Other factors such as HTATSF1/Tat-SF1, SUPT5H/SPT5, and HTATIP2 are also important for Tat's function. Besides its effect on RNA Pol II processivity, Tat induces chromatin remodeling of proviral genes by recruiting the histone acetyltransferases (HATs) CREBBP, EP300 and PCAF to the chromatin. This also contributes to the increase in proviral transcription rate, especially when the provirus integrates in transcriptionally silent region of the host genome. To ensure maximal activation of the LTR, Tat mediates nuclear translocation of NF-kappa-B by interacting with host RELA. Through its interaction with host TBP, Tat may also modulate transcription initiation. Tat can reactivate a latently infected cell by penetrating in it and transactivating its LTR promoter. In the cytoplasm, Tat is thought to act as a translational activator of HIV-1 mRNAs. Functionally, extracellular circulating Tat can be endocytosed by surrounding uninfected cells via the binding to several surface receptors such as CD26, CXCR4, heparan sulfate proteoglycans (HSPG) or LDLR. Neurons are rarely infected, but they internalize Tat via their LDLR. Through its interaction with nuclear HATs, Tat is potentially able to control the acetylation-dependent cellular gene expression. Modulates the expression of many cellular genes involved in cell survival, proliferation or in coding for cytokines or cytokine receptors. Tat plays a role in T-cell and neurons apoptosis. Tat induced neurotoxicity and apoptosis probably contribute to neuroAIDS. Circulating Tat also acts as a chemokine-like and/or growth factor-like molecule that binds to specific receptors on the surface of the cells, affecting many cellular pathways. In the vascular system, Tat binds to ITGAV/ITGB3 and ITGA5/ITGB1 integrins dimers at the surface of endothelial cells and competes with bFGF for heparin-binding sites, leading to an excess of soluble bFGF. This is Protein Tat from Homo sapiens (Human).